A 501-amino-acid chain; its full sequence is MNTMSHKFVLALDEGTTSARAILFDSDLNIVNIGQYEFPQHYPQPGYVEHDPEEIWEAQMLAVKKAISKIDAKQIVAIGITNQRETTVLWDAKSGKPVYNAIVWQDRRTSPITDWLKANYFKMIKDKTGLVPDPYFSASKIKWILDNVSNVREKAERGEIKFGTIDTYLIWRLTNGKAHVTDYSNASRTMLFNINKLEWDREILELLKIPESILPEVKPSSEIYGYSEALGNLIPISGDAGDQQAALFGQVAFNVGEIKATYGTGSFILMNIGNNPIRSENLLTTIAWGLEKNKAKYALEGSIFITGAAVQWFRDGLRAIDVSDEIEPLASSVEDNGGVYFVPAFVGLGAPYWDPYARGLIIGITRGTTKAHIARAILESMAYQTRDVIEVMQKEAGISINSLKVDGGAAKDNLLMQFQADILGIKVIRPKVMETTSMGVAMLAGLGVGLWNSLEELRNIWKVDKEFIPSMSEEKRRALYSGWKEAVKRAMGWAKVVGGQV.

T16 contributes to the ADP binding site. Positions 16, 17, and 18 each coordinate ATP. T16 is a sn-glycerol 3-phosphate binding site. ADP is bound at residue R20. Sn-glycerol 3-phosphate-binding residues include R84, E85, Y135, and D242. Positions 84, 85, 135, 242, and 243 each coordinate glycerol. ADP is bound by residues T264 and G307. T264, G307, Q311, and G408 together coordinate ATP. G408 lines the ADP pocket.

The protein belongs to the FGGY kinase family.

It carries out the reaction glycerol + ATP = sn-glycerol 3-phosphate + ADP + H(+). The protein operates within polyol metabolism; glycerol degradation via glycerol kinase pathway; sn-glycerol 3-phosphate from glycerol: step 1/1. Functionally, key enzyme in the regulation of glycerol uptake and metabolism. Catalyzes the phosphorylation of glycerol to yield sn-glycerol 3-phosphate. The polypeptide is Glycerol kinase (Saccharolobus islandicus (strain M.14.25 / Kamchatka #1) (Sulfolobus islandicus)).